The following is a 547-amino-acid chain: Chaperonin GroEL (547 aa).

Residues Thr30 to Pro33, Lys51, Asp87 to Thr91, Gly416, Asn480 to Ala482, and Asp496 each bind ATP.

This sequence belongs to the chaperonin (HSP60) family. Forms a cylinder of 14 subunits composed of two heptameric rings stacked back-to-back. Interacts with the co-chaperonin GroES.

The protein localises to the cytoplasm. The enzyme catalyses ATP + H2O + a folded polypeptide = ADP + phosphate + an unfolded polypeptide.. Functionally, together with its co-chaperonin GroES, plays an essential role in assisting protein folding. The GroEL-GroES system forms a nano-cage that allows encapsulation of the non-native substrate proteins and provides a physical environment optimized to promote and accelerate protein folding. This is Chaperonin GroEL from Pseudoalteromonas translucida (strain TAC 125).